Reading from the N-terminus, the 155-residue chain is MVRVVATGTFDIIHPGHIRFLEEAKKLGDELIVIVAREKNVRHKPKPIIPEEQRVRVVSALKPVDKAILGDEHDIFKPIMELKPDIIALGYDQHFDEKKLEEELRKRGLNTRVVRIKAKEECEYCSSTKIIKRIVDVVKSRLQEYEEFFRSRGML.

ATP-binding positions include 9–10 (TF), 14–17 (HPGH), and D92.

The protein belongs to the archaeal FAD synthase family. Homodimer. A divalent metal cation is required as a cofactor.

The catalysed reaction is FMN + ATP + H(+) = FAD + diphosphate. It functions in the pathway cofactor biosynthesis; FAD biosynthesis; FAD from FMN: step 1/1. Its function is as follows. Catalyzes the transfer of the AMP portion of ATP to flavin mononucleotide (FMN) to produce flavin adenine dinucleotide (FAD) coenzyme. This chain is FAD synthase, found in Archaeoglobus profundus (strain DSM 5631 / JCM 9629 / NBRC 100127 / Av18).